The following is a 268-amino-acid chain: Undecaprenyl-diphosphatase (268 aa).

A run of 8 helical transmembrane segments spans residues 9 to 29, 47 to 67, 83 to 103, 107 to 127, 144 to 164, 184 to 204, 218 to 238, and 246 to 266; these read VILG…TGHL, FDVL…FAKL, FIIG…AAGS, LFLF…AVLL, FPVL…IPGV, AAEF…VYDL, IVAV…KTFL, and FQLF…ALAM.

Belongs to the UppP family.

The protein localises to the cell inner membrane. It carries out the reaction di-trans,octa-cis-undecaprenyl diphosphate + H2O = di-trans,octa-cis-undecaprenyl phosphate + phosphate + H(+). Functionally, catalyzes the dephosphorylation of undecaprenyl diphosphate (UPP). Confers resistance to bacitracin. The protein is Undecaprenyl-diphosphatase of Rhodopseudomonas palustris (strain HaA2).